The chain runs to 139 residues: Peptide methionine sulfoxide reductase MsrB (139 aa).

Residues 14–137 (DEEWRRELTP…NSISLDFQPE (124 aa)) enclose the MsrB domain. Residues cysteine 53, cysteine 56, cysteine 102, and cysteine 105 each contribute to the Zn(2+) site. Residue cysteine 126 is the Nucleophile of the active site.

The protein belongs to the MsrB Met sulfoxide reductase family. Zn(2+) serves as cofactor.

It catalyses the reaction L-methionyl-[protein] + [thioredoxin]-disulfide + H2O = L-methionyl-(R)-S-oxide-[protein] + [thioredoxin]-dithiol. The protein is Peptide methionine sulfoxide reductase MsrB of Leifsonia xyli subsp. xyli (strain CTCB07).